The primary structure comprises 286 residues: Elongation factor Ts (286 aa).

The involved in Mg(2+) ion dislocation from EF-Tu stretch occupies residues 79–82 (TDFV).

It belongs to the EF-Ts family.

It is found in the cytoplasm. Its function is as follows. Associates with the EF-Tu.GDP complex and induces the exchange of GDP to GTP. It remains bound to the aminoacyl-tRNA.EF-Tu.GTP complex up to the GTP hydrolysis stage on the ribosome. This is Elongation factor Ts from Wolbachia sp. subsp. Drosophila simulans (strain wRi).